The primary structure comprises 356 residues: Transcription factor ATOH1 (356 aa).

A compositionally biased stretch (basic and acidic residues) spans 1-21 (MSRLLHAEEWAEVKELGDHHR). Disordered regions lie at residues 1–56 (MSRL…PELS) and 92–125 (SEAAAPRDEVDGRGELVRRSSGGASSSKSPGPVK). Residues 26 to 40 (HHLPQPPPPPPPQPP) are compositionally biased toward pro residues. Residues 96-109 (APRDEVDGRGELVR) show a composition bias toward basic and acidic residues. Low complexity predominate over residues 110 to 124 (RSSGGASSSKSPGPV). The region spanning 161 to 213 (QRRLAANARERRRMHGLNHAFDQLRNVIPSFNNDKKLSKYETLQMAQIYINAL) is the bHLH domain. 2 disordered regions span residues 218–279 (QTPS…TRFS) and 314–356 (SPSL…DEAS). Over residues 252 to 266 (NATAAGAQQASGGSQ) the composition is skewed to low complexity. Basic and acidic residues predominate over residues 337-356 (HRSDGEFSPHSHYSDSDEAS).

Efficient DNA binding requires dimerization with another bHLH protein.

The protein resides in the nucleus. Transcriptional regulator. Activates E box-dependent transcription in collaboration with TCF3/E47, but the activity is completely antagonized by the negative regulator of neurogenesis HES1. Plays a role in the differentiation of subsets of neural cells by activating E box-dependent transcription. The chain is Transcription factor ATOH1 from Pan troglodytes (Chimpanzee).